Here is a 352-residue protein sequence, read N- to C-terminus: MSFIDEAKVFVKGGNGGNGCVSFRREKYIEFGGPDGGNGGDGGSVILEASSAVNTLLFFRYHQHLRAENGKSGSGKKKSGASGRDLVIKVPIGTQVFDSPGGSLIADLSTVGQRYVVASGGKGGVGNAQYKSSTNRAPVYYTLGAVEEEFPIFMQLKVLSDIGIIGMPNAGKSSLLSRCTMSKTKVADYPFTTLEPHLGVARINEYDLILADIPGLIENANEGAGLGHKFLKHIERCSLLLHLIDGSTEDIVGAYKLVSRELAMYSKELSEKREVIVLNKCDMITEEEIVQKKHLLEDYSNKTVVTLSLDDPLNPLLVMLYEMLQKDDIEEESKKFDPFLHVGYNKKKTPKI.

One can recognise an Obg domain in the interval 1–159 (MSFIDEAKVF…FPIFMQLKVL (159 aa)). Residues 160 to 327 (SDIGIIGMPN…VMLYEMLQKD (168 aa)) enclose the OBG-type G domain. Residues 166-173 (GMPNAGKS), 191-195 (FTTLE), 212-215 (DIPG), 279-282 (NKCD), and 308-310 (SLD) contribute to the GTP site. Ser173 and Thr193 together coordinate Mg(2+).

It belongs to the TRAFAC class OBG-HflX-like GTPase superfamily. OBG GTPase family. In terms of assembly, monomer. Mg(2+) is required as a cofactor.

Its subcellular location is the cytoplasm. In terms of biological role, an essential GTPase which binds GTP, GDP and possibly (p)ppGpp with moderate affinity, with high nucleotide exchange rates and a fairly low GTP hydrolysis rate. Plays a role in control of the cell cycle, stress response, ribosome biogenesis and in those bacteria that undergo differentiation, in morphogenesis control. The chain is GTPase Obg from Anaplasma phagocytophilum (strain HZ).